We begin with the raw amino-acid sequence, 262 residues long: Histone chaperone cia1 (262 aa).

Residues 157–262 (IQWDNPDFDD…KPEEKPETSQ (106 aa)) are disordered. 2 coiled-coil regions span residues 173 to 196 (DADE…EGEG) and 223 to 253 (KGSE…AEEK). Acidic residues-rich tracts occupy residues 173–219 (DADE…GEGE) and 226–242 (EEEE…EEES). Residues 250-262 (AEEKPEEKPETSQ) are compositionally biased toward basic and acidic residues.

The protein belongs to the ASF1 family. Interacts with histone H3 and histone H4.

The protein localises to the nucleus. Histone chaperone that facilitates histone deposition and histone exchange and removal during nucleosome assembly and disassembly. The chain is Histone chaperone cia1 (cia1) from Schizosaccharomyces pombe (strain 972 / ATCC 24843) (Fission yeast).